A 502-amino-acid polypeptide reads, in one-letter code: Glucose-6-phosphate isomerase (502 aa).

Residue E331 is the Proton donor of the active site. Catalysis depends on residues H362 and K471.

This sequence belongs to the GPI family.

Its subcellular location is the cytoplasm. The catalysed reaction is alpha-D-glucose 6-phosphate = beta-D-fructose 6-phosphate. It functions in the pathway carbohydrate biosynthesis; gluconeogenesis. The protein operates within carbohydrate degradation; glycolysis; D-glyceraldehyde 3-phosphate and glycerone phosphate from D-glucose: step 2/4. Functionally, catalyzes the reversible isomerization of glucose-6-phosphate to fructose-6-phosphate. This is Glucose-6-phosphate isomerase from Xylella fastidiosa (strain M12).